Consider the following 266-residue polypeptide: Indole-3-glycerol phosphate synthase (266 aa).

Belongs to the TrpC family.

It carries out the reaction 1-(2-carboxyphenylamino)-1-deoxy-D-ribulose 5-phosphate + H(+) = (1S,2R)-1-C-(indol-3-yl)glycerol 3-phosphate + CO2 + H2O. It participates in amino-acid biosynthesis; L-tryptophan biosynthesis; L-tryptophan from chorismate: step 4/5. This is Indole-3-glycerol phosphate synthase from Acidovorax sp. (strain JS42).